We begin with the raw amino-acid sequence, 257 residues long: Snake venom serine protease KN1 (257 aa).

Positions 1–18 are cleaved as a signal peptide; sequence MVLIRVLANLLILQLSYA. Residues 19–24 constitute a propeptide that is removed on maturation; the sequence is QKSSEL. A Peptidase S1 domain is found at 25–248; the sequence is VVGGHPCNIN…HLDWIKSIIA (224 aa). Disulfide bonds link Cys31-Cys162, Cys49-Cys65, Cys141-Cys209, Cys173-Cys188, and Cys199-Cys224. The Charge relay system role is filled by His64. Asn102 is a glycosylation site (N-linked (GlcNAc...) asparagine). The Charge relay system role is filled by Asp109. Asn120 and Asn121 each carry an N-linked (GlcNAc...) asparagine glycan. Residue Ser203 is the Charge relay system of the active site.

This sequence belongs to the peptidase S1 family. Snake venom subfamily. Monomer. In terms of tissue distribution, expressed by the venom gland.

It localises to the secreted. In terms of biological role, snake venom serine protease that may act in the hemostasis system of the prey. In Trimeresurus stejnegeri (Chinese green tree viper), this protein is Snake venom serine protease KN1.